The chain runs to 718 residues: Polyribonucleotide nucleotidyltransferase (718 aa).

2 residues coordinate Mg(2+): Asp-497 and Asp-503. A KH domain is found at 564–623 (PRLLTLKIEPEHIGMVIGPGGKTIKGITEQTSCKIDIADDGTVTIASSEGERAERARQMI). The 69-residue stretch at 633–701 (GEVYLGRVTR…SKGRLNLTRL (69 aa)) folds into the S1 motif domain.

This sequence belongs to the polyribonucleotide nucleotidyltransferase family. In terms of assembly, interacts with RNase E (rne). Requires Mg(2+) as cofactor.

It is found in the cytoplasm. The enzyme catalyses RNA(n+1) + phosphate = RNA(n) + a ribonucleoside 5'-diphosphate. Involved in mRNA degradation. Catalyzes the phosphorolysis of single-stranded polyribonucleotides processively in the 3'- to 5'-direction. The sequence is that of Polyribonucleotide nucleotidyltransferase from Synechocystis sp. (strain ATCC 27184 / PCC 6803 / Kazusa).